We begin with the raw amino-acid sequence, 323 residues long: uncharacterized protein (323 aa).

Positions 16 to 95 constitute an S4 RNA-binding domain; that stretch reads QRIDQFCLKI…DKLKIIFEDE (80 aa). Aspartate 148 is an active-site residue.

This sequence belongs to the pseudouridine synthase RluA family.

The catalysed reaction is a uridine in RNA = a pseudouridine in RNA. This is an uncharacterized protein from Mycoplasma genitalium (strain ATCC 33530 / DSM 19775 / NCTC 10195 / G37) (Mycoplasmoides genitalium).